The primary structure comprises 1042 residues: Exosome RNA helicase MTR4 (1042 aa).

Position 2 is an N-acetylalanine (A2). The disordered stretch occupies residues 16–74 (DSTTAAGTKKDKEKDKGKWKGPPGSADKAGKRFDGKLQSESTNNGKNKRDVDFEGTDEP). Residues 23-33 (TKKDKEKDKGK) are compositionally biased toward basic and acidic residues. A Glycyl lysine isopeptide (Lys-Gly) (interchain with G-Cter in SUMO2) cross-link involves residue K24. S40 carries the phosphoserine modification. The span at 43-52 (KAGKRFDGKL) shows a compositional bias: basic and acidic residues. 2 positions are modified to N6-acetyllysine: K51 and K78. ATP contacts are provided by residues I139, 161-168 (AHTSAGKT), S164, G166, K167, and T168. A Helicase ATP-binding domain is found at 148-304 (IQCVDNNQSV…WICHLHKQPC (157 aa)). The DEIH box motif lies at 252 to 255 (DEIH). K358 is covalently cross-linked (Glycyl lysine isopeptide (Lys-Gly) (interchain with G-Cter in SUMO2)). Residues 405 to 577 (QMTKLDFNTD…NMVLNLLRVE (173 aa)) form the Helicase C-terminal domain. Residues K684 and K723 each participate in a glycyl lysine isopeptide (Lys-Gly) (interchain with G-Cter in SUMO2) cross-link.

The protein belongs to the helicase family. SKI2 subfamily. In terms of assembly, component of a TRAMP-like complex, an ATP-dependent exosome regulatory complex consisting of a helicase (MTREX), an oligadenylate polymerase (TENT4B or TENT4A), and a substrate specific RNA-binding factor (ZCCHC7 or ZCCHC8). Several TRAMP-like complexes exist with specific compositions and are associated with nuclear, or nucleolar RNA exosomes. Identified in the spliceosome C complex. Component of the poly(A) tail exosome targeting (PAXT) complex made of PABPN1, ZFC3H1 and MTREX that directs a subset of long and polyadenylated poly(A) RNAs for exosomal degradation. Component of the nuclear exosome targeting (NEXT) complex composed of MTREX, ZCCHC8, and RBM7 that directs a subset of non-coding short-lived RNAs for exosomal degradation. Interacts with ZCCHC8; this interaction bridges the interaction between RBM7 and MTREX. Binds to ZFC3H1 and RBM7 in a RNase-insensitive manner. Interacts with EXOSC10; the interaction mediates the association of MTREX with nuclear RNA exosomes. Interacts with isoform 1 of NVL in an ATP-dependent manner; the interaction is required to associate NVL with nuclear RNA exosome. Interacts with WDR74; the interaction dissociation in a late stage of rRNA synthesis is required for appropriate maturation of pre-60S particles and depends on the ATPase activity of NVL. Interacts with MPHOSPH6. Interacts with the RNA cap-binding complex proteins NCBP1 and SRRT. Interacts with NRDE2; the interaction is direct and negatively regulates MTREX function in exosomal degradation by changing its conformation precluding interaction with ZFC3H1, the RNA cap-binding complex proteins NCBP1 and SRRT, and association with the exosome. Associates with the RNA exosome complex.

The protein localises to the nucleus. It localises to the nucleoplasm. The protein resides in the nucleolus. Its subcellular location is the nucleus speckle. The catalysed reaction is ATP + H2O = ADP + phosphate + H(+). Its activity is regulated as follows. Activated when MTREX is incorporated into NEXT complex an the nuclear RNA exosome complex. Its function is as follows. Catalyzes the ATP-dependent unwinding of RNA duplexes with a single-stranded 3' RNA extension. Central subunit of many protein complexes, namely TRAMP-like, nuclear exosome targeting (NEXT) and poly(A) tail exosome targeting (PAXT). NEXT functions as an RNA exosome cofactor that directs a subset of non-coding short-lived RNAs for exosomal degradation. NEXT is involved in surveillance and turnover of aberrant transcripts and non-coding RNAs. PAXT directs a subset of long and polyadenylated poly(A) RNAs for exosomal degradation. The RNA exosome is fundamental for the degradation of RNA in eukaryotic nuclei. Substrate targeting is facilitated by its cofactor ZCCHC8, which links to RNA-binding protein adapters. Associated with the RNA exosome complex and involved in the 3'-processing of the 7S pre-RNA to the mature 5.8S rRNA. May be involved in pre-mRNA splicing. In the context of NEXT complex can also in vitro unwind DNA:RNA heteroduplexes with a 3' poly (A) RNA tracking strand. Can promote unwinding and degradation of structured RNA substrates when associated with the nuclear exosome and its cofactors. Can displace a DNA strand while translocating on RNA to ultimately degrade the RNA within a DNA/RNA heteroduplex. Plays a role in DNA damage response. The sequence is that of Exosome RNA helicase MTR4 from Homo sapiens (Human).